A 196-amino-acid chain; its full sequence is MEYDNFFIKILESLINDKITLKRQISVNIPDTDNIFGNSDLTTTLWTSQFQCPQKFHHKFFDAIKDSRGINWIRADSFIEILGFKNKPKKVLKKYVSKRYKCYLIDIDSPVKKNLIDTVFKPKTIFIRYEGLLQLISQSNNPKSVKLWEHIAQIILPNNYHKNPVNQASILQRDNRQLVIRHIEEDIYELEDDIRN.

The Bro-N domain maps to 58-163 (HKFFDAIKDS…IILPNNYHKN (106 aa)).

This is an uncharacterized protein from Acanthamoeba polyphaga mimivirus (APMV).